A 479-amino-acid polypeptide reads, in one-letter code: Catalase A (479 aa).

The span at 1 to 21 shows a compositional bias: polar residues; sequence MSKILTTASGAPVADNQNSRS. Residues 1-25 are disordered; it reads MSKILTTASGAPVADNQNSRSAGPR. Catalysis depends on residues H53 and N126. Residue Y336 participates in heme binding. The segment at 350–376 is disordered; the sequence is QLPVNAPRCPVNSYQRDGSMATGSYGS. The span at 361-376 shows a compositional bias: polar residues; it reads NSYQRDGSMATGSYGS.

It belongs to the catalase family. The cofactor is heme.

The catalysed reaction is 2 H2O2 = O2 + 2 H2O. Activated by peroxide. The major expressed catalase protein in strain Corvallis in stationary phase. Decomposes hydrogen peroxide into water and oxygen; serves to protect cells from the toxic effects of hydrogen peroxide. The protein is Catalase A (katA) of Pseudomonas putida (Arthrobacter siderocapsulatus).